The following is a 352-amino-acid chain: Coproporphyrin III ferrochelatase (352 aa).

2 residues coordinate Fe-coproporphyrin III: S52 and Y121. The Fe(2+) site is built by H178 and E267.

Belongs to the ferrochelatase family.

The protein resides in the cytoplasm. The enzyme catalyses Fe-coproporphyrin III + 2 H(+) = coproporphyrin III + Fe(2+). It functions in the pathway porphyrin-containing compound metabolism; protoheme biosynthesis. In terms of biological role, involved in coproporphyrin-dependent heme b biosynthesis. Catalyzes the insertion of ferrous iron into coproporphyrin III to form Fe-coproporphyrin III. The sequence is that of Coproporphyrin III ferrochelatase from Propionibacterium freudenreichii subsp. freudenreichii.